The following is a 388-amino-acid chain: Ferrochelatase (388 aa).

Residues His196 and Glu277 each contribute to the Fe cation site.

Belongs to the ferrochelatase family.

The protein resides in the cytoplasm. The catalysed reaction is heme b + 2 H(+) = protoporphyrin IX + Fe(2+). Its pathway is porphyrin-containing compound metabolism; protoheme biosynthesis; protoheme from protoporphyrin-IX: step 1/1. Functionally, catalyzes the ferrous insertion into protoporphyrin IX. In Nostoc punctiforme (strain ATCC 29133 / PCC 73102), this protein is Ferrochelatase.